A 363-amino-acid polypeptide reads, in one-letter code: DNA replication and repair protein RecF (363 aa).

30–37 (GSNGSGKT) is a binding site for ATP.

This sequence belongs to the RecF family.

It is found in the cytoplasm. Functionally, the RecF protein is involved in DNA metabolism; it is required for DNA replication and normal SOS inducibility. RecF binds preferentially to single-stranded, linear DNA. It also seems to bind ATP. The sequence is that of DNA replication and repair protein RecF from Photorhabdus laumondii subsp. laumondii (strain DSM 15139 / CIP 105565 / TT01) (Photorhabdus luminescens subsp. laumondii).